Reading from the N-terminus, the 281-residue chain is Pantothenate synthetase (281 aa).

An ATP-binding site is contributed by Met-30–His-37. His-37 (proton donor) is an active-site residue. Gln-61 contacts (R)-pantoate. Position 61 (Gln-61) interacts with beta-alanine. Gly-147–Asp-150 serves as a coordination point for ATP. A (R)-pantoate-binding site is contributed by Gln-153. ATP is bound by residues Ile-176 and Lys-184–Arg-187.

Belongs to the pantothenate synthetase family. In terms of assembly, homodimer.

The protein localises to the cytoplasm. It catalyses the reaction (R)-pantoate + beta-alanine + ATP = (R)-pantothenate + AMP + diphosphate + H(+). It functions in the pathway cofactor biosynthesis; (R)-pantothenate biosynthesis; (R)-pantothenate from (R)-pantoate and beta-alanine: step 1/1. Its function is as follows. Catalyzes the condensation of pantoate with beta-alanine in an ATP-dependent reaction via a pantoyl-adenylate intermediate. The chain is Pantothenate synthetase from Clostridium botulinum (strain Okra / Type B1).